A 356-amino-acid polypeptide reads, in one-letter code: DNA polymerase IV (356 aa).

The UmuC domain occupies 1 to 188 (MDTSRKIIHI…IPVTKFYGVG (188 aa)). Mg(2+)-binding residues include D11 and D106. Residue E107 is part of the active site.

Belongs to the DNA polymerase type-Y family. Monomer. Requires Mg(2+) as cofactor.

It localises to the cytoplasm. It catalyses the reaction DNA(n) + a 2'-deoxyribonucleoside 5'-triphosphate = DNA(n+1) + diphosphate. In terms of biological role, poorly processive, error-prone DNA polymerase involved in untargeted mutagenesis. Copies undamaged DNA at stalled replication forks, which arise in vivo from mismatched or misaligned primer ends. These misaligned primers can be extended by PolIV. Exhibits no 3'-5' exonuclease (proofreading) activity. May be involved in translesional synthesis, in conjunction with the beta clamp from PolIII. The chain is DNA polymerase IV from Listeria monocytogenes serotype 4b (strain F2365).